The primary structure comprises 895 residues: Androgen receptor (895 aa).

Positions 1-533 (MEVQLGLGRV…PIDYYFPPQK (533 aa)) are modulating. Residues 1-562 (MEVQLGLGRV…GSCKVFFKRA (562 aa)) form an interaction with ZNF318 region. Disordered regions lie at residues 33–155 (VIQN…PTFP) and 175–211 (QLLQ…YLGG). Low complexity-rich tracts occupy residues 44–81 (AASA…GSPQ) and 175–200 (QLLQ…ASGA). Ser-66 is subject to Phosphoserine; by CDK9. Position 79 is a phosphoserine (Ser-79). Over residues 201 to 211 (PTSSKDNYLGG) the composition is skewed to polar residues. Residue Tyr-208 is modified to Phosphotyrosine; by CSK. Ser-241 bears the Phosphoserine mark. At Tyr-252 the chain carries Phosphotyrosine; by CSK and TNK2. Tyr-292, Tyr-331, Tyr-342, and Tyr-347 each carry phosphotyrosine; by CSK. Residue Tyr-348 is modified to Phosphotyrosine; by CSK and TNK2. A Glycyl lysine isopeptide (Lys-Gly) (interchain with G-Cter in SUMO) cross-link involves residue Lys-371. Residue Tyr-378 is modified to Phosphotyrosine; by CSK. Lys-496 is covalently cross-linked (Glycyl lysine isopeptide (Lys-Gly) (interchain with G-Cter in SUMO)). A phosphotyrosine; by CSK mark is found at Tyr-510 and Tyr-527. The interaction with LPXN stretch occupies residues 527 to 894 (YYFPPQKTCL…GKVKPIYFHT (368 aa)). The nuclear receptor DNA-binding region spans 534–607 (TCLICGDEAS…AGMTLGARKL (74 aa)). NR C4-type zinc fingers lie at residues 535–555 (CLIC…CGSC) and 571–595 (CASR…LRKC). Residues 547–637 (YGALTCGSCK…TEETAQKLTV (91 aa)) form an interaction with HIPK3 region. Residues 567–894 (QKYLCASRND…GKVKPIYFHT (328 aa)) are interaction with CCAR1. The interval 600-894 (MTLGARKLKK…GKVKPIYFHT (295 aa)) is interaction with KAT7. Ser-626 is modified (phosphoserine; by STK4/MST1). Residues 644–875 (ECQPIFLNVL…DFPEMMAEII (232 aa)) enclose the NR LBD domain. Asn-681 and Arg-728 together coordinate 17beta-hydroxy-5alpha-androstan-3-one. Glycyl lysine isopeptide (Lys-Gly) (interchain with G-Cter in ubiquitin) cross-links involve residues Lys-821 and Lys-823. Thr-853 is a 17beta-hydroxy-5alpha-androstan-3-one binding site. Phosphotyrosine; by CSK is present on Tyr-891.

The protein belongs to the nuclear hormone receptor family. NR3 subfamily. In terms of assembly, binds DNA as a homodimer. Part of a ternary complex containing AR, EFCAB6/DJBP and PARK7. Interacts with HIPK3 and NR0B2 in the presence of androgen. The ligand binding domain interacts with KAT7/HBO1 in the presence of dihydrotestosterone. Interacts with EFCAB6/DJBP, PQBP1, RANBP9, RBAK, SPDEF, SRA1, TGFB1I1 and RREB1. Interacts with ZMIZ1/ZIMP10 and ZMIZ2/ZMIP7 which both enhance its transactivation activity. Interacts with SLC30A9 and RAD54L2/ARIP4. Interacts with MACROD1 (via macro domain). Interacts via the ligand-binding domain with LXXLL and FXXLF motifs from NCOA1, NCOA2, NCOA3 and MAGEA11. Interacts (via nuclear receptor DNA binding domain and nuclear receptor ligand binding domain) with NCOA4. The AR N-terminal poly-Gln region binds Ran resulting in enhancement of AR-mediated transactivation. Ran-binding decreases as the poly-Gln length increases. Interacts with HIP1 (via coiled coil domain). Interacts (via ligand-binding domain) with TRIM68. Interacts with TNK2. Interacts with USP26. Interacts with RNF6. Interacts (regulated by RNF6 probably through polyubiquitination) with RNF14; regulates AR transcriptional activity. Interacts with PRMT2 and TRIM24. Interacts with RACK1. Interacts with RANBP10; this interaction enhances dihydrotestosterone-induced AR transcriptional activity. Interacts with PRPF6 in a hormone-independent way; this interaction enhances dihydrotestosterone-induced AR transcriptional activity. Interacts with STK4/MST1. Interacts with ZIPK/DAPK3. Interacts with LPXN. Interacts with MAK. Part of a complex containing AR, MAK and NCOA3. Interacts with CRY1. Interacts with CCAR1 and GATA2. Interacts with ZNF318. Interacts with BUD31. Interacts with ARID4A. Interacts with ARID4B. Interacts (via NR LBD domain) with ZBTB7A; the interaction is direct and androgen-dependent. Interacts with NCOR1. Interacts with NCOR2. Interacts with CRY2 in a ligand-dependent manner. Phosphorylated in prostate cancer cells in response to several growth factors including EGF. Phosphorylation is induced by c-Src kinase (CSK). Tyr-510 is one of the major phosphorylation sites and an increase in phosphorylation and Src kinase activity is associated with prostate cancer progression. Phosphorylation by TNK2 enhances the DNA-binding and transcriptional activity. Phosphorylation at Ser-66 by CDK9 regulates AR promoter selectivity and cell growth. In terms of processing, sumoylated on Lys-371 (major) and Lys-496. Ubiquitinated. Deubiquitinated by USP26. 'Lys-6' and 'Lys-27'-linked polyubiquitination by RNF6 modulates AR transcriptional activity and specificity. Post-translationally, palmitoylated by ZDHHC7 and ZDHHC21. Palmitoylation is required for plasma membrane targeting and for rapid intracellular signaling via ERK and AKT kinases and cAMP generation.

It is found in the nucleus. The protein resides in the cytoplasm. Its function is as follows. Steroid hormone receptors are ligand-activated transcription factors that regulate eukaryotic gene expression and affect cellular proliferation and differentiation in target tissues. Transcription factor activity is modulated by bound coactivator and corepressor proteins like ZBTB7A that recruits NCOR1 and NCOR2 to the androgen response elements/ARE on target genes, negatively regulating androgen receptor signaling and androgen-induced cell proliferation. Transcription activation is also down-regulated by NR0B2. Activated, but not phosphorylated, by HIPK3 and ZIPK/DAPK3. This Papio hamadryas (Hamadryas baboon) protein is Androgen receptor (AR).